Consider the following 167-residue polypeptide: MEHSRCLSCLILAALLSQVNPRALEVLEAEDKVILKCNSSITLLQGTAGQEVSDNKTLNLGKRIEDPRGMYQCGENAKSFTLQVYYRMCQNCVELDSATLAGLIITDIIATVLLALGVYCFAGHETGRFSRAADTQVLMGNDQLYQPLRERNDAQYSRLGDKWARNK.

The N-terminal stretch at 1 to 21 (MEHSRCLSCLILAALLSQVNP) is a signal peptide. Residues 22 to 100 (RALEVLEAED…NCVELDSATL (79 aa)) are Extracellular-facing. A disulfide bridge links Cys37 with Cys73. 2 N-linked (GlcNAc...) asparagine glycosylation sites follow: Asn38 and Asn55. A helical membrane pass occupies residues 101 to 121 (AGLIITDIIATVLLALGVYCF). At 122–167 (AGHETGRFSRAADTQVLMGNDQLYQPLRERNDAQYSRLGDKWARNK) the chain is on the cytoplasmic side. The ITAM domain maps to 134 to 162 (DTQVLMGNDQLYQPLRERNDAQYSRLGDK). Phosphotyrosine occurs at positions 145 and 156.

The TCR-CD3 complex is composed of a CD3D/CD3E and a CD3G/CD3E heterodimers that preferentially associate with TCRalpha and TCRbeta, respectively, to form TCRalpha/CD3E/CD3G and TCRbeta/CD3G/CD3E trimers. In turn, the hexamer interacts with CD3Z homodimer to form the TCR-CD3 complex. Alternatively, TCRalpha and TCRbeta can be replaced by TCRgamma and TCRdelta. Interacts with coreceptors CD4 and CD8. Post-translationally, phosphorylated on Tyr residues after T-cell receptor triggering by LCK in association with CD4/CD8. CD3D is mostly present on T-lymphocytes with its TCR-CD3 partners. Present also in fetal NK-cells.

It is found in the cell membrane. Functionally, part of the TCR-CD3 complex present on T-lymphocyte cell surface that plays an essential role in adaptive immune response. When antigen presenting cells (APCs) activate T-cell receptor (TCR), TCR-mediated signals are transmitted across the cell membrane by the CD3 chains CD3D, CD3E, CD3G and CD3Z. All CD3 chains contain immunoreceptor tyrosine-based activation motifs (ITAMs) in their cytoplasmic domain. Upon TCR engagement, these motifs become phosphorylated by Src family protein tyrosine kinases LCK and FYN, resulting in the activation of downstream signaling pathways. In addition of this role of signal transduction in T-cell activation, CD3D plays an essential role in thymocyte differentiation. Indeed, participates in correct intracellular TCR-CD3 complex assembly and surface expression. In absence of a functional TCR-CD3 complex, thymocytes are unable to differentiate properly. Interacts with CD4 and CD8 and thus serves to establish a functional link between the TCR and coreceptors CD4 and CD8, which is needed for activation and positive selection of CD4 or CD8 T-cells. The polypeptide is T-cell surface glycoprotein CD3 delta chain (CD3D) (Ovis aries (Sheep)).